Here is a 62-residue protein sequence, read N- to C-terminus: MDQLVFKETIWNDAFWQNPWDQGGLAVIILFITAVLLLILFAIVFGLLTSTENTQCEAGEEE.

Residues 25–45 (LAVIILFITAVLLLILFAIVF) form a helical membrane-spanning segment.

As to quaternary structure, homooligomer. Can also form heterooligomers with other sarcoplasmic/endoplasmic reticulum calcium ATPase (SERCA) regulators ARLN, PLN, SLN and STRIT1/DWORF. Monomer. Interacts as a monomer with ATP2A2/SERCA2; the interaction results in inhibition of ATP2A2 Ca(2+) affinity.

It localises to the endoplasmic reticulum membrane. In terms of biological role, inhibits the activity of the calcium ATPases ATP2A2/SERCA2 and ATP2A3/SERCA3 by decreasing their apparent affinity for Ca(2+). This Homo sapiens (Human) protein is Endoregulin.